The primary structure comprises 190 residues: Thioredoxin F-type, chloroplastic (190 aa).

The interval methionine 1 to glycine 31 is disordered. Residues methionine 1 to glutamate 77 constitute a chloroplast transit peptide. Residues leucine 7–proline 30 show a composition bias toward polar residues. A Thioredoxin domain is found at methionine 78–serine 189. Residues cysteine 114 and cysteine 117 each act as nucleophile in the active site. Cysteine 114 and cysteine 117 are oxidised to a cystine.

The protein belongs to the thioredoxin family. Plant F-type subfamily. As to quaternary structure, forms a complex with heterodimeric ferredoxin-thioredoxin reductase (FTR) and ferredoxin.

It is found in the plastid. Its subcellular location is the chloroplast. Functionally, participates in various redox reactions through the reversible oxidation of the active center dithiol to a disulfide. The F form is known to activate a number of enzymes of the photosynthetic carbon cycle. This is Thioredoxin F-type, chloroplastic from Spinacia oleracea (Spinach).